A 431-amino-acid chain; its full sequence is Na(+)-translocating NADH-quinone reductase subunit F (431 aa).

Residues 10–30 (IFVASAAFCSLGLILVAVILL) form a helical membrane-spanning segment. In terms of domain architecture, 2Fe-2S ferredoxin-type spans 41 to 133 (CKLKINNDDS…DLCLEVEERY (93 aa)). [2Fe-2S] cluster contacts are provided by cysteine 76, cysteine 82, cysteine 85, and cysteine 117. The region spanning 136–286 (ASSWEGTVVS…SGPYGESFMK (151 aa)) is the FAD-binding FR-type domain.

This sequence belongs to the NqrF family. In terms of assembly, composed of six subunits; NqrA, NqrB, NqrC, NqrD, NqrE and NqrF. It depends on [2Fe-2S] cluster as a cofactor. FAD is required as a cofactor.

Its subcellular location is the cell inner membrane. The enzyme catalyses a ubiquinone + n Na(+)(in) + NADH + H(+) = a ubiquinol + n Na(+)(out) + NAD(+). NQR complex catalyzes the reduction of ubiquinone-1 to ubiquinol by two successive reactions, coupled with the transport of Na(+) ions from the cytoplasm to the periplasm. The first step is catalyzed by NqrF, which accepts electrons from NADH and reduces ubiquinone-1 to ubisemiquinone by a one-electron transfer pathway. The polypeptide is Na(+)-translocating NADH-quinone reductase subunit F (Chlamydia trachomatis serovar A (strain ATCC VR-571B / DSM 19440 / HAR-13)).